The following is an 83-amino-acid chain: Urotensin-2 (83 aa).

The propeptide occupies 49–71 (EVLLEKQSLLNPFSRVFGIRKQF). Cysteines 77 and 82 form a disulfide.

The protein belongs to the urotensin-2 family.

Its subcellular location is the secreted. Functionally, urotensin is found in the teleost caudal neurosecretory system. It has a suggested role in osmoregulation and as a corticotropin-releasing factor. The non-hormonal portion of this precursor may be a urotensin binding protein, urophysin. The chain is Urotensin-2 from Platichthys flesus (European flounder).